The chain runs to 231 residues: Probable glutathione S-transferase (231 aa).

The GST N-terminal domain maps to 4-96 (PNFELYGYFR…YLEEALPTNA (93 aa)). Residues Ser14, Gln43, Val57, 80–81 (QS), Gln124, and 128–130 (NLK) each bind glutathione. Residues 105-227 (NPVARAHVRT…HWQKQEDTPE (123 aa)) form the GST C-terminal domain.

It belongs to the GST superfamily. Zeta family. As to quaternary structure, homodimer.

The catalysed reaction is RX + glutathione = an S-substituted glutathione + a halide anion + H(+). Its function is as follows. Probable glutathione S-transferase. The polypeptide is Probable glutathione S-transferase (Coccidioides immitis (strain RS) (Valley fever fungus)).